Reading from the N-terminus, the 117-residue chain is Large ribosomal subunit protein bL17 (117 aa).

The protein belongs to the bacterial ribosomal protein bL17 family. As to quaternary structure, part of the 50S ribosomal subunit. Contacts protein L32.

The polypeptide is Large ribosomal subunit protein bL17 (Coprothermobacter proteolyticus (strain ATCC 35245 / DSM 5265 / OCM 4 / BT)).